The primary structure comprises 227 residues: DNA utilization protein YhgH (227 aa).

It belongs to the ComF/GntX family.

Required for the use of extracellular DNA as a nutrient. Has been suggested to be involved in gluconate metabolism. This is DNA utilization protein YhgH from Escherichia coli (strain K12).